A 267-amino-acid chain; its full sequence is Phosphate import ATP-binding protein PstB (267 aa).

The ABC transporter domain maps to 12-251; it reads VSLDNVSIRY…EFDKTKNMFN (240 aa). Residue 44–51 coordinates ATP; it reads GPSGCGKS.

Belongs to the ABC transporter superfamily. Phosphate importer (TC 3.A.1.7) family. The complex is composed of two ATP-binding proteins (PstB), two transmembrane proteins (PstC and PstA) and a solute-binding protein (PstS).

It is found in the cell inner membrane. It carries out the reaction phosphate(out) + ATP + H2O = ADP + 2 phosphate(in) + H(+). Functionally, part of the ABC transporter complex PstSACB involved in phosphate import. Responsible for energy coupling to the transport system. The polypeptide is Phosphate import ATP-binding protein PstB (Prochlorococcus marinus (strain NATL2A)).